Reading from the N-terminus, the 752-residue chain is Xanthine dehydrogenase molybdenum-binding subunit (752 aa).

Positions 206, 237, 350, and 516 each coordinate Mo-molybdopterin.

Belongs to the xanthine dehydrogenase family. As to quaternary structure, heterotrimer of XdhA, XdhB and XdhC. Requires Mo-molybdopterin as cofactor.

The enzyme catalyses xanthine + NAD(+) + H2O = urate + NADH + H(+). It catalyses the reaction hypoxanthine + NAD(+) + H2O = xanthine + NADH + H(+). It functions in the pathway purine metabolism; hypoxanthine degradation; urate from hypoxanthine: step 1/2. It participates in purine metabolism; hypoxanthine degradation; urate from hypoxanthine: step 2/2. Its function is as follows. Presumed to be a dehydrogenase, but possibly an oxidase. Participates in limited purine salvage (requires aspartate) but does not support aerobic growth on purines as the sole carbon source (purine catabolism). The protein is Xanthine dehydrogenase molybdenum-binding subunit (xdhA) of Escherichia coli O157:H7.